We begin with the raw amino-acid sequence, 251 residues long: Ubiquinone/menaquinone biosynthesis C-methyltransferase UbiE (251 aa).

S-adenosyl-L-methionine-binding positions include T74, D95, 123–124, and S140; that span reads NA.

The protein belongs to the class I-like SAM-binding methyltransferase superfamily. MenG/UbiE family.

The catalysed reaction is a 2-demethylmenaquinol + S-adenosyl-L-methionine = a menaquinol + S-adenosyl-L-homocysteine + H(+). The enzyme catalyses a 2-methoxy-6-(all-trans-polyprenyl)benzene-1,4-diol + S-adenosyl-L-methionine = a 5-methoxy-2-methyl-3-(all-trans-polyprenyl)benzene-1,4-diol + S-adenosyl-L-homocysteine + H(+). It functions in the pathway quinol/quinone metabolism; menaquinone biosynthesis; menaquinol from 1,4-dihydroxy-2-naphthoate: step 2/2. It participates in cofactor biosynthesis; ubiquinone biosynthesis. In terms of biological role, methyltransferase required for the conversion of demethylmenaquinol (DMKH2) to menaquinol (MKH2) and the conversion of 2-polyprenyl-6-methoxy-1,4-benzoquinol (DDMQH2) to 2-polyprenyl-3-methyl-6-methoxy-1,4-benzoquinol (DMQH2). The polypeptide is Ubiquinone/menaquinone biosynthesis C-methyltransferase UbiE (Proteus mirabilis (strain HI4320)).